The chain runs to 367 residues: Leucine dehydrogenase (367 aa).

The active site involves lysine 80. 180-186 (GVGNVAY) serves as a coordination point for NAD(+).

This sequence belongs to the Glu/Leu/Phe/Val dehydrogenases family. As to quaternary structure, homohexamer.

The enzyme catalyses L-leucine + NAD(+) + H2O = 4-methyl-2-oxopentanoate + NH4(+) + NADH + H(+). The protein operates within amino-acid degradation; L-leucine degradation; 4-methyl-2-oxopentanoate from L-leucine (dehydrogenase route): step 1/1. Catalyzes the reversible deamination of L-leucine to 4-methyl-2-oxopentanoate. In Geobacillus stearothermophilus (Bacillus stearothermophilus), this protein is Leucine dehydrogenase (ldh).